Here is a 349-residue protein sequence, read N- to C-terminus: Glycosyltransferase 8 domain-containing protein 2 (349 aa).

Residues 1 to 6 lie on the Cytoplasmic side of the membrane; the sequence is MAFLRK. Residues 7 to 24 form a helical; Signal-anchor for type II membrane protein membrane-spanning segment; it reads VNQVLLLLLVLTLCGILY. Topologically, residues 25 to 349 are lumenal; sequence KKVHKGAVLK…AGIFKLHHNR (325 aa). Asn234 carries an N-linked (GlcNAc...) asparagine glycan.

Belongs to the glycosyltransferase 8 family.

The protein resides in the membrane. The chain is Glycosyltransferase 8 domain-containing protein 2 (Glt8d2) from Mus musculus (Mouse).